Reading from the N-terminus, the 158-residue chain is Phosphopantetheine adenylyltransferase (158 aa).

This sequence belongs to the eukaryotic CoaD family.

It localises to the cytoplasm. The catalysed reaction is (R)-4'-phosphopantetheine + ATP + H(+) = 3'-dephospho-CoA + diphosphate. It functions in the pathway cofactor biosynthesis; coenzyme A biosynthesis. Reversibly transfers an adenylyl group from ATP to 4'-phosphopantetheine, yielding dephospho-CoA (dPCoA) and pyrophosphate. The chain is Phosphopantetheine adenylyltransferase from Pyrococcus horikoshii (strain ATCC 700860 / DSM 12428 / JCM 9974 / NBRC 100139 / OT-3).